The chain runs to 306 residues: tRNA dimethylallyltransferase (306 aa).

An ATP-binding site is contributed by 14–21; sequence GPTAAGKS. 16–21 contacts substrate; it reads TAAGKS. The segment at 39–42 is interaction with substrate tRNA; that stretch reads DSRL.

The protein belongs to the IPP transferase family. Monomer. The cofactor is Mg(2+).

It catalyses the reaction adenosine(37) in tRNA + dimethylallyl diphosphate = N(6)-dimethylallyladenosine(37) in tRNA + diphosphate. Its function is as follows. Catalyzes the transfer of a dimethylallyl group onto the adenine at position 37 in tRNAs that read codons beginning with uridine, leading to the formation of N6-(dimethylallyl)adenosine (i(6)A). The polypeptide is tRNA dimethylallyltransferase (Synechococcus elongatus (strain ATCC 33912 / PCC 7942 / FACHB-805) (Anacystis nidulans R2)).